A 1101-amino-acid chain; its full sequence is Leucine-rich repeat receptor-like serine/threonine-protein kinase At1g17230 (1101 aa).

An N-terminal signal peptide occupies residues 1 to 23 (MRGRICFLAIVILCSFSFILVRS). Residues 24 to 734 (LNEEGRVLLE…WLINGSQRQK (711 aa)) lie on the Extracellular side of the membrane. Residues Asn-39, Asn-57, Asn-78, and Asn-97 are each glycosylated (N-linked (GlcNAc...) asparagine). 26 LRR repeats span residues 66–90 (LRTVTSVDLNGMNLSGTLSPLICKL), 91–115 (HGLRKLNVSTNFISGPIPQDLSLCR), 117–137 (LEVLDLCTNRFHGVIPIQLTM), 138–162 (IITLKKLYLCENYLFGSIPRQIGNL), 163–186 (SSLQELVIYSNNLTGVIPPSMAKL), 188–210 (QLRIIRAGRNGFSGVIPSEISGC), 211–234 (ESLKVLGLAENLLEGSLPKQLEKL), 235–258 (QNLTDLILWQNRLSGEIPPSVGNI), 260–282 (RLEVLALHENYFTGSIPREIGKL), 283–306 (TKMKRLYLYTNQLTGEIPREIGNL), 308–329 (DAAEIDFSENQLTGFIPKEFGH), 330–354 (ILNLKLLHLFENILLGPIPRELGEL), 355–379 (TLLEKLDLSINRLNGTIPQELQFLP), 381–402 (LVDLQLFDNQLEGKIPPLIGFY), 403–426 (SNFSVLDMSANSLSGPIPAHFCRF), 427–450 (QTLILLSLGSNKLSGNIPRDLKTC), 451–474 (KSLTKLMLGDNQLTGSLPIELFNL), 476–498 (NLTALELHQNWLSGNISADLGKL), 499–522 (KNLERLRLANNNFTGEIPPEIGNL), 524–546 (KIVGFNISSNQLTGHIPKELGSC), 548–569 (TIQRLDLSGNKFSGYIAQELGQ), 570–593 (LVYLEILRLSDNRLTGEIPHSFGD), 595–618 (TRLMELQLGGNLLSENIPVELGKL), 619–643 (TSLQISLNISHNNLSGTIPDSLGNL), 644–667 (QMLEILYLNDNKLSGEIPASIGNL), and 669–692 (SLLICNISNNNLVGTVPDTAVFQR). 2 N-linked (GlcNAc...) asparagine glycosylation sites follow: Asn-161 and Asn-174. 2 N-linked (GlcNAc...) asparagine glycosylation sites follow: Asn-236 and Asn-257. Asn-368 is a glycosylation site (N-linked (GlcNAc...) asparagine). Asn-404 carries an N-linked (GlcNAc...) asparagine glycan. N-linked (GlcNAc...) asparagine glycans are attached at residues Asn-476, Asn-490, Asn-510, Asn-521, and Asn-529. Residues Asn-626 and Asn-631 are each glycosylated (N-linked (GlcNAc...) asparagine). N-linked (GlcNAc...) asparagine glycosylation is found at Asn-674 and Asn-728. The helical transmembrane segment at 735–755 (ILTITCIVIGSVFLITFLGLC) threads the bilayer. Over 756–1101 (WTIKRREPAF…LEEANSSKEI (346 aa)) the chain is Cytoplasmic. A phosphothreonine mark is found at Thr-788 and Thr-796. One can recognise a Protein kinase domain in the interval 799 to 1081 (FSEDVVLGRG…ITEARGSSSL (283 aa)). ATP-binding positions include 805–813 (LGRGACGTV) and Lys-827. A phosphotyrosine mark is found at Tyr-874 and Tyr-913. Asp-926 (proton acceptor) is an active-site residue. Residue Ser-960 is modified to Phosphoserine. Phosphotyrosine is present on residues Tyr-968 and Tyr-975. Thr-976 carries the phosphothreonine modification. The disordered stretch occupies residues 1076–1101 (RGSSSLSSSSITSETPLEEANSSKEI). Over residues 1078-1088 (SSSLSSSSITS) the composition is skewed to low complexity.

The protein belongs to the protein kinase superfamily. Ser/Thr protein kinase family.

It is found in the cell membrane. The enzyme catalyses L-seryl-[protein] + ATP = O-phospho-L-seryl-[protein] + ADP + H(+). It catalyses the reaction L-threonyl-[protein] + ATP = O-phospho-L-threonyl-[protein] + ADP + H(+). In Arabidopsis thaliana (Mouse-ear cress), this protein is Leucine-rich repeat receptor-like serine/threonine-protein kinase At1g17230.